Reading from the N-terminus, the 359-residue chain is Fructose-bisphosphate aldolase (359 aa).

Ser-50 serves as a coordination point for D-glyceraldehyde 3-phosphate. Catalysis depends on Asp-83, which acts as the Proton donor. Zn(2+) contacts are provided by His-84, Asp-105, Glu-142, and His-198. Gly-199 is a binding site for dihydroxyacetone phosphate. Position 232 (His-232) interacts with Zn(2+). Dihydroxyacetone phosphate contacts are provided by residues 233–235 (GSS) and 275–278 (NIDT).

The protein belongs to the class II fructose-bisphosphate aldolase family. Requires Zn(2+) as cofactor.

It catalyses the reaction beta-D-fructose 1,6-bisphosphate = D-glyceraldehyde 3-phosphate + dihydroxyacetone phosphate. The protein operates within carbohydrate degradation; glycolysis; D-glyceraldehyde 3-phosphate and glycerone phosphate from D-glucose: step 4/4. Functionally, catalyzes the aldol condensation of dihydroxyacetone phosphate (DHAP or glycerone-phosphate) with glyceraldehyde 3-phosphate (G3P) to form fructose 1,6-bisphosphate (FBP) in gluconeogenesis and the reverse reaction in glycolysis. This is Fructose-bisphosphate aldolase (fba) from Nostoc commune.